Consider the following 294-residue polypeptide: Complement C1q tumor necrosis factor-related protein 2 (294 aa).

Positions 1 to 24 (MTIFKKVTTMISWVLLACALPCAA) are cleaved as a signal peptide. A disordered region spans residues 42–156 (QLVCSLPGPQ…PGPCSCGSSR (115 aa)). Positions 48–150 (PGPQGPPGPP…KGEPGLPGPC (103 aa)) constitute a Collagen-like domain. The span at 50–59 (PQGPPGPPGA) shows a compositional bias: pro residues. A compositionally biased stretch (basic and acidic residues) spans 75–87 (DGQDGQDGDRGDS). Low complexity predominate over residues 105–129 (KGKAGAIGRAGPRGPKGVSGTPGKH). Positions 154–290 (SSRAKSAFSV…GFLIYADQGD (137 aa)) constitute a C1q domain.

In terms of assembly, may interact with ERFE.

It localises to the secreted. Involved in the regulation of lipid metabolism in adipose tissue and liver. The chain is Complement C1q tumor necrosis factor-related protein 2 (C1qtnf2) from Mus musculus (Mouse).